A 169-amino-acid polypeptide reads, in one-letter code: Transcription antitermination protein NusB (169 aa).

Basic and acidic residues predominate over residues 1–19; it reads MAEMKKTIDNKPAPKGEKK. A disordered region spans residues 1 to 22; it reads MAEMKKTIDNKPAPKGEKKANR.

The protein belongs to the NusB family.

Functionally, involved in transcription antitermination. Required for transcription of ribosomal RNA (rRNA) genes. Binds specifically to the boxA antiterminator sequence of the ribosomal RNA (rrn) operons. The sequence is that of Transcription antitermination protein NusB from Rhodopseudomonas palustris (strain BisB18).